The chain runs to 707 residues: MGEHRLARSAFLWGLSGIYLFAFVSLYVQIPGLYGREGILPAWKMLRFTGKGFWEQMKDSPSLLWFGPRLGLDTEMTMELICLLGALLSLGALLFSCLRDSLVFLLLWVFYLSLYQVGQVFLYFQWDSLLLETGFLAILVAPLHAMRWKTSVWSAHDGVTFWLTRWLLFRLMFASGVVKLTSRCPTWWGLTALTYHYETQCIPNPAAWYAHQLPVWLQKFSVVATFFIEIGVPWLFFLPFRRLRLFSFYSQVLLQILIIITGNYNFFNLLTIVLCCSMLDDQHIAFFQRHKKTQHKGGIATSAFSLRSLVSLLEIPIFGLLVFWTVKYFDLQINWDKHSLESRTAFTYHDFQQWLRTITFPSIWIAAASLGWEILKGMYRSASVRGFFWKLWSTLQWLMFSCAAAAMFTISLVPYTYMDFESNGQLWPEVHQMFNTVDRYQLVNSYGLFRRMTGVGGRPEVVVEGSFDRETWTEIEFMYKPGNISTIPTVIVPHQPRLDWQMWFAALSHHSHSPWFASFVYRLLQGNKDVIHLVQNDESLYPFHANPPTYIRAQQYKYWFTEVDQSGHMPKSWWRRRHVEEFFPAVFLDDPFLDNLLSQHGLKDKPPARRSLDAPIPFVLKLIRDFLHPLPAPLLLHSFIFGIFTIYFLQAMFGGVSRPSVAKQRHSMPPNEKKKQKPNSGQGESASSKSSGHGTDTVRRNKKNEKS.

The next 10 helical transmembrane spans lie at 10–30 (AFLWGLSGIYLFAFVSLYVQI), 78–98 (MELICLLGALLSLGALLFSCL), 102–122 (LVFLLLWVFYLSLYQVGQVFL), 126–146 (WDSLLLETGFLAILVAPLHAM), 158–178 (GVTFWLTRWLLFRLMFASGVV), 220–240 (FSVVATFFIEIGVPWLFFLPF), 256–276 (ILIIITGNYNFFNLLTIVLCC), 309–329 (LVSLLEIPIFGLLVFWTVKYF), 358–378 (ITFPSIWIAAASLGWEILKGM), and 395–415 (LQWLMFSCAAAAMFTISLVPY). Residue asparagine 483 is glycosylated (N-linked (GlcNAc...) asparagine). The helical transmembrane segment at 634 to 654 (LLLHSFIFGIFTIYFLQAMFG) threads the bilayer. The interval 661-707 (VAKQRHSMPPNEKKKQKPNSGQGESASSKSSGHGTDTVRRNKKNEKS) is disordered. Low complexity predominate over residues 680-694 (SGQGESASSKSSGHG). Over residues 696–707 (DTVRRNKKNEKS) the composition is skewed to basic and acidic residues.

It belongs to the lipase maturation factor family.

The protein resides in the endoplasmic reticulum membrane. Its function is as follows. Involved in the maturation of specific proteins in the endoplasmic reticulum. The polypeptide is Lipase maturation factor 2 (lmf2) (Xenopus laevis (African clawed frog)).